The chain runs to 76 residues: Putative snRNP Sm-like protein (76 aa).

A Sm domain is found at 4 to 76 (RPLDVIHKSL…VLAISPTEEG (73 aa)).

This sequence belongs to the snRNP Sm proteins family.

The chain is Putative snRNP Sm-like protein from Pyrococcus furiosus (strain ATCC 43587 / DSM 3638 / JCM 8422 / Vc1).